The chain runs to 183 residues: UPF0398 protein PEPE_0933 (183 aa).

It belongs to the UPF0398 family.

The protein is UPF0398 protein PEPE_0933 of Pediococcus pentosaceus (strain ATCC 25745 / CCUG 21536 / LMG 10740 / 183-1w).